Reading from the N-terminus, the 432-residue chain is MERRRITSAARRSYISSGEMMVGGLAPGRRLGPGTRLSLARMPPPLPTRVDFSLAGALNAGFKETRASERAEMMELNDRFASYIEKVRFLEQQNKALAAELNQLRAKEPTKLADVYQAELRELRLRLDQLTANSARLEVERDNLAQDLGTVRQKLQDETNLRLEAENNLAAYRQEADEATLARLDLERKTESLEEEIRFLRKIHEEEVRELQEQLARQQVHVELDMAKPDLTAALKEIRTQYEAMASSNMHEAEEWYRSKFADLTDAAARNAELLRQAKHEANDYRRQLQSLTCDLESLRGTNESLERQMREQEERHAREAASYQEALARLEEEGQSLKDEMARHLQEYQDLLNVKLALDIEIATYRKLLEGEENRITIPVQTFSNLQIRETSLDTKSVSEGHLKRNIVVKTVEMRDGEVIKESKQEHKDVM.

The segment at 1–72 (MERRRITSAA…KETRASERAE (72 aa)) is head. Thr7 bears the Phosphothreonine; by AURKB and ROCK1 mark. Arg12 carries the post-translational modification Omega-N-methylarginine. At Ser13 the chain carries Phosphoserine; by AURKB and ROCK1. Citrulline is present on residues Arg30 and Arg36. Ser38 is modified (phosphoserine; by AURKB and ROCK1). The 309-residue stretch at 69 to 377 (ERAEMMELND…KLLEGEENRI (309 aa)) folds into the IF rod domain. Residues 73–104 (MMELNDRFASYIEKVRFLEQQNKALAAELNQL) are coil 1A. Ser82 bears the Phosphoserine mark. A linker 1 region spans residues 105-115 (RAKEPTKLADV). Phosphothreonine is present on residues Thr110 and Thr150. The tract at residues 116–214 (YQAELRELRL…EEEVRELQEQ (99 aa)) is coil 1B. Residues 215–230 (LARQQVHVELDMAKPD) form a linker 12 region. The coil 2A stretch occupies residues 231–252 (LTAALKEIRTQYEAMASSNMHE). The interval 253–256 (AEEW) is linker 2. The segment at 257-377 (YRSKFADLTD…KLLEGEENRI (121 aa)) is coil 2B. Arg270 is subject to Citrulline. Residue Ser323 is modified to Phosphoserine. The interval 378–432 (TIPVQTFSNLQIRETSLDTKSVSEGHLKRNIVVKTVEMRDGEVIKESKQEHKDVM) is tail. Residue Thr383 is modified to Phosphothreonine. Ser385 carries the phosphoserine modification. Citrulline occurs at positions 406 and 416.

The protein belongs to the intermediate filament family. As to quaternary structure, interacts with SYNM. In terms of processing, phosphorylated by PKN1.

Its subcellular location is the cytoplasm. In terms of biological role, GFAP, a class-III intermediate filament, is a cell-specific marker that, during the development of the central nervous system, distinguishes astrocytes from other glial cells. In Pongo abelii (Sumatran orangutan), this protein is Glial fibrillary acidic protein (GFAP).